A 545-amino-acid chain; its full sequence is Esterase-5C (545 aa).

Residues methionine 1–alanine 19 form the signal peptide. Cysteines 84 and 103 form a disulfide. N-linked (GlcNAc...) asparagine glycosylation is present at asparagine 113. The active-site Acyl-ester intermediate is serine 207. Cysteine 259 and cysteine 271 are joined by a disulfide. Asparagine 421 carries N-linked (GlcNAc...) asparagine glycosylation. The Charge relay system role is filled by histidine 467. N-linked (GlcNAc...) asparagine glycosylation is present at asparagine 507. Cysteine 515 and cysteine 536 are oxidised to a cystine.

The protein belongs to the type-B carboxylesterase/lipase family.

It localises to the secreted. The enzyme catalyses a carboxylic ester + H2O = an alcohol + a carboxylate + H(+). This is Esterase-5C (Est-5C) from Drosophila persimilis (Fruit fly).